The primary structure comprises 176 residues: MFHATTIVAVKRGTKVAVAGDGQVTFGQNTIMKHTARKVRRLHNGQVLAGFAGSVADAFTLFEKFEGKLEEYHGNLMRAAVELAKAWRTDKYLRTLEAMLIVANQEHLLVLSGNGEVIEPDEGVTAIGSGGPYALAAARALTKHTNLSPKDITYEALNLAADICVYTNKNIVVEEI.

The active site involves T5. Na(+)-binding residues include A161, C164, and T167.

This sequence belongs to the peptidase T1B family. HslV subfamily. In terms of assembly, a double ring-shaped homohexamer of HslV is capped on each side by a ring-shaped HslU homohexamer. The assembly of the HslU/HslV complex is dependent on binding of ATP.

The protein resides in the cytoplasm. It catalyses the reaction ATP-dependent cleavage of peptide bonds with broad specificity.. With respect to regulation, allosterically activated by HslU binding. In terms of biological role, protease subunit of a proteasome-like degradation complex believed to be a general protein degrading machinery. The chain is ATP-dependent protease subunit HslV from Desulforamulus reducens (strain ATCC BAA-1160 / DSM 100696 / MI-1) (Desulfotomaculum reducens).